Here is a 387-residue protein sequence, read N- to C-terminus: RNA polymerase II elongation factor ELL3 (387 aa).

Disordered stretches follow at residues 127-148 and 186-275; these read LTEGTRESESWQDSEDEPEGHP and LSNR…EEVP. Over residues 230 to 239 the composition is skewed to polar residues; sequence SPLQGLSNQD. S240 is subject to Phosphoserine. Over residues 240 to 251 the composition is skewed to acidic residues; sequence SPEEQDWGQDAD. Positions 257-271 are enriched in low complexity; that stretch reads EQSLSVQSASESPSP. Residues 275-385 form the OCEL domain; sequence PDYLLQYSTI…LILEFEEKNR (111 aa).

This sequence belongs to the ELL/occludin family. Interacts with AFF4. Component of the super elongation complex (SEC), at least composed of EAF1, EAF2, CDK9, MLLT3/AF9, AFF (AFF1 or AFF4), the P-TEFb complex and ELL (ELL, ELL2 or ELL3). Component of the little elongation complex (LEC), at least composed of ELL (ELL, ELL2 or ELL3), ZC3H8, ICE1 and ICE2.

The protein resides in the nucleus. In terms of biological role, enhancer-binding elongation factor that specifically binds enhancers in embryonic stem cells (ES cells), marks them, and is required for their future activation during stem cell specification. Elongation factor component of the super elongation complex (SEC), a complex required to increase the catalytic rate of RNA polymerase II transcription by suppressing transient pausing by the polymerase at multiple sites along the DNA. Component of the little elongation complex (LEC), a complex required to regulate small nuclear RNA (snRNA) gene transcription by RNA polymerase II and III. Does not only bind to enhancer regions of active genes, but also marks the enhancers that are in a poised or inactive state in ES cells and is required for establishing proper RNA polymerase II occupancy at developmentally regulated genes in a cohesin-dependent manner. Probably required for priming developmentally regulated genes for later recruitment of the super elongation complex (SEC), for transcriptional activation during differentiation. Required for recruitment of P-TEFb within SEC during differentiation. Probably preloaded on germ cell chromatin, suggesting that it may prime gene activation by marking enhancers as early as in the germ cells. Promoting epithelial-mesenchymal transition (EMT). In Rattus norvegicus (Rat), this protein is RNA polymerase II elongation factor ELL3 (Ell3).